The following is a 164-amino-acid chain: Crossover junction endodeoxyribonuclease RuvC (164 aa).

Residues D7, E67, and D140 contribute to the active site. Mg(2+) contacts are provided by D7, E67, and D140.

Belongs to the RuvC family. As to quaternary structure, homodimer which binds Holliday junction (HJ) DNA. The HJ becomes 2-fold symmetrical on binding to RuvC with unstacked arms; it has a different conformation from HJ DNA in complex with RuvA. In the full resolvosome a probable DNA-RuvA(4)-RuvB(12)-RuvC(2) complex forms which resolves the HJ. Mg(2+) is required as a cofactor.

Its subcellular location is the cytoplasm. The enzyme catalyses Endonucleolytic cleavage at a junction such as a reciprocal single-stranded crossover between two homologous DNA duplexes (Holliday junction).. Functionally, the RuvA-RuvB-RuvC complex processes Holliday junction (HJ) DNA during genetic recombination and DNA repair. Endonuclease that resolves HJ intermediates. Cleaves cruciform DNA by making single-stranded nicks across the HJ at symmetrical positions within the homologous arms, yielding a 5'-phosphate and a 3'-hydroxyl group; requires a central core of homology in the junction. The consensus cleavage sequence is 5'-(A/T)TT(C/G)-3'. Cleavage occurs on the 3'-side of the TT dinucleotide at the point of strand exchange. HJ branch migration catalyzed by RuvA-RuvB allows RuvC to scan DNA until it finds its consensus sequence, where it cleaves and resolves the cruciform DNA. This is Crossover junction endodeoxyribonuclease RuvC from Alkaliphilus oremlandii (strain OhILAs) (Clostridium oremlandii (strain OhILAs)).